A 76-amino-acid polypeptide reads, in one-letter code: Conotoxin Cal29b (76 aa).

Positions 1-43 (MKLTCVLIVAVLILAACQFTAANMARYGKTQIARSDVKSIDAR) are cleaved as a signal peptide.

It belongs to the conotoxin O1 superfamily. May contain 4 disulfide bonds. Expressed by the venom duct.

The protein localises to the secreted. Its function is as follows. Is able to inhibit the growth of Mycobacterium tuberculosis (MIC=0.22-3.52 uM against strain H37Rv and 2 multidrug-resistant strains). May also show neurotoxic activity. In Californiconus californicus (California cone), this protein is Conotoxin Cal29b.